The chain runs to 100 residues: Putative septation protein SpoVG (100 aa).

Belongs to the SpoVG family.

Functionally, could be involved in septation. In Staphylococcus haemolyticus (strain JCSC1435), this protein is Putative septation protein SpoVG.